Here is a 235-residue protein sequence, read N- to C-terminus: Large ribosomal subunit protein uL1 (235 aa).

It belongs to the universal ribosomal protein uL1 family. As to quaternary structure, part of the 50S ribosomal subunit.

In terms of biological role, binds directly to 23S rRNA. The L1 stalk is quite mobile in the ribosome, and is involved in E site tRNA release. Functionally, protein L1 is also a translational repressor protein, it controls the translation of the L11 operon by binding to its mRNA. The polypeptide is Large ribosomal subunit protein uL1 (Methylibium petroleiphilum (strain ATCC BAA-1232 / LMG 22953 / PM1)).